The following is a 149-amino-acid chain: Nucleoside diphosphate kinase (149 aa).

Residues Lys-9, Phe-57, Arg-85, Thr-91, Arg-102, and Asn-112 each contribute to the ATP site. Catalysis depends on His-115, which acts as the Pros-phosphohistidine intermediate.

The protein belongs to the NDK family. In terms of assembly, homotetramer. The cofactor is Mg(2+).

It localises to the cytoplasm. It catalyses the reaction a 2'-deoxyribonucleoside 5'-diphosphate + ATP = a 2'-deoxyribonucleoside 5'-triphosphate + ADP. The catalysed reaction is a ribonucleoside 5'-diphosphate + ATP = a ribonucleoside 5'-triphosphate + ADP. Major role in the synthesis of nucleoside triphosphates other than ATP. The ATP gamma phosphate is transferred to the NDP beta phosphate via a ping-pong mechanism, using a phosphorylated active-site intermediate. The sequence is that of Nucleoside diphosphate kinase from Heliobacterium modesticaldum (strain ATCC 51547 / Ice1).